The primary structure comprises 264 residues: Thymidylate synthase (264 aa).

DUMP is bound at residue arginine 21. Position 51 (histidine 51) interacts with (6R)-5,10-methylene-5,6,7,8-tetrahydrofolate. Arginine 126–arginine 127 lines the dUMP pocket. Residue cysteine 146 is the Nucleophile of the active site. Residues arginine 166–aspartate 169, asparagine 177, and histidine 207–tyrosine 209 contribute to the dUMP site. Aspartate 169 serves as a coordination point for (6R)-5,10-methylene-5,6,7,8-tetrahydrofolate. Residue alanine 263 participates in (6R)-5,10-methylene-5,6,7,8-tetrahydrofolate binding.

Belongs to the thymidylate synthase family. Bacterial-type ThyA subfamily. As to quaternary structure, homodimer.

Its subcellular location is the cytoplasm. The catalysed reaction is dUMP + (6R)-5,10-methylene-5,6,7,8-tetrahydrofolate = 7,8-dihydrofolate + dTMP. The protein operates within pyrimidine metabolism; dTTP biosynthesis. In terms of biological role, catalyzes the reductive methylation of 2'-deoxyuridine-5'-monophosphate (dUMP) to 2'-deoxythymidine-5'-monophosphate (dTMP) while utilizing 5,10-methylenetetrahydrofolate (mTHF) as the methyl donor and reductant in the reaction, yielding dihydrofolate (DHF) as a by-product. This enzymatic reaction provides an intracellular de novo source of dTMP, an essential precursor for DNA biosynthesis. This chain is Thymidylate synthase, found in Baumannia cicadellinicola subsp. Homalodisca coagulata.